Consider the following 263-residue polypeptide: Glucosamine-6-phosphate deaminase 2 (263 aa).

The Proton acceptor; for enolization step role is filled by aspartate 82. Asparagine 151 (for ring-opening step) is an active-site residue. Residue histidine 153 is the Proton acceptor; for ring-opening step of the active site. Residue glutamate 158 is the For ring-opening step of the active site.

Belongs to the glucosamine/galactosamine-6-phosphate isomerase family. In terms of assembly, homohexamer.

It catalyses the reaction alpha-D-glucosamine 6-phosphate + H2O = beta-D-fructose 6-phosphate + NH4(+). In terms of biological role, catalyzes the reversible conversion of alpha-D-glucosamine 6-phosphate (GlcN-6P) into beta-D-fructose 6-phosphate (Fru-6P) and ammonium ion, a regulatory reaction step in de novo uridine diphosphate-N-acetyl-alpha-D-glucosamine (UDP-GlcNAc) biosynthesis via hexosamine pathway. This is Glucosamine-6-phosphate deaminase 2 (GPI2) from Giardia intestinalis (Giardia lamblia).